Here is a 246-residue protein sequence, read N- to C-terminus: Probable aquaporin AqpM (246 aa).

The Cytoplasmic segment spans residues 1–12; the sequence is MTMTLAKRFTAE. Residues 13 to 33 form a helical membrane-spanning segment; it reads VVGTFILVFFGPGAAVITLMI. Topologically, residues 34–56 are extracellular; that stretch reads ANGADKPNEFNIGIGALGGLGDW. The helical transmembrane segment at 57–77 threads the bilayer; the sequence is FAIGMAFALAIAAVIYSLGRI. Residues 78 to 104 lie on the Cytoplasmic side of the membrane; it reads SGAHINPAVTIALWSIGRFPGREVVPY. The NPA 1 motif lies at 83–85; the sequence is NPA. The helical transmembrane segment at 105–125 threads the bilayer; it reads IVAQFIGAALGSLLFLACVGP. The Extracellular portion of the chain corresponds to 126–146; sequence AAATVGGLGATAPFPGIGYGQ. A helical membrane pass occupies residues 147-167; the sequence is AILTEAIGTFLLMLVIMGVAV. Residues 168–173 lie on the Cytoplasmic side of the membrane; that stretch reads DERAPP. A helical transmembrane segment spans residues 174-194; sequence GFAGLVIGLTVGGIITTIGNI. At 195–217 the chain is on the extracellular side; the sequence is TGSSLNPARTFGPYLGDSLMGIN. Residues 200 to 202 carry the NPA 2 motif; sequence NPA. Residues 218 to 238 traverse the membrane as a helical segment; sequence LWQYFPIYVIGPIVGAVAAAW. At 239–246 the chain is on the cytoplasmic side; it reads LYNYLAKE.

Belongs to the MIP/aquaporin (TC 1.A.8) family.

The protein localises to the cell membrane. Functionally, channel that permits osmotically driven movement of water in both directions. The chain is Probable aquaporin AqpM (aqpM) from Archaeoglobus fulgidus (strain ATCC 49558 / DSM 4304 / JCM 9628 / NBRC 100126 / VC-16).